We begin with the raw amino-acid sequence, 530 residues long: Anthranilate synthase component 1, pyocyanine specific (530 aa).

331–332 contacts substrate; it reads GT. Glu364 serves as a coordination point for Mg(2+). Residues Tyr452, Arg472, 486 to 488, and Gly488 contribute to the substrate site; that span reads GAG. Glu501 contacts Mg(2+).

This sequence belongs to the anthranilate synthase component I family. Heterotetramer consisting of two non-identical subunits: a beta subunit (PhnB) and a large alpha subunit (PhnA). Mg(2+) is required as a cofactor.

The catalysed reaction is chorismate + L-glutamine = anthranilate + pyruvate + L-glutamate + H(+). The protein operates within secondary metabolite biosynthesis; pyocyanine biosynthesis. Its function is as follows. Part of a heterotetrameric complex that catalyzes the two-step biosynthesis of anthranilate, a precursor for Pseudomonas quinolone signal (2-heptyl-3-hydroxy-4-quinolone; PQS) production which is required to induce the genes for the biosynthesis of the virulence factor pyocyanine (PCN), a characteristic blue-green phenazine pigment produced by P.aeruginosa. In the first step, the glutamine-binding beta subunit (PhnB) of anthranilate synthase (AS) provides the glutamine amidotransferase activity which generates ammonia as a substrate that, along with chorismate, is used in the second step, catalyzed by the large alpha subunit of AS (PhnA) to produce anthranilate. The protein is Anthranilate synthase component 1, pyocyanine specific of Pseudomonas aeruginosa (strain ATCC 15692 / DSM 22644 / CIP 104116 / JCM 14847 / LMG 12228 / 1C / PRS 101 / PAO1).